The chain runs to 397 residues: MALALVLNSGSSSIKFQLVNPENSAIDEPYVSGLVEQIGEPNGRIVLKVEGEKYTLETPIADHSEGLNLAFDLMDQHNCGPSQLEITAVGHRVVHGGILFSAPELITDEIVEMIRDLIPLAPLHNPANVDGIDVARKILPDVPHVAVFDTGFFHSLPPAAALYAINKDVAAEHGIRRYGFHGTSHEFVSKRVVEILEKPTEEINTITFHLGNGASMAAVQGGRAVDTSMGMTPLAGLVMGTRSGDIDPGIVFHLSRTAGMSIDEIDNLLNKKSGVKGLSGVNDFRELREMIDNNDQDAWSAYNIYIHQLRRYLGSYMVALGRVDTIVFTAGVGENAQFVREDALAGLEMYGIEIDPERNALPNDGPRLISTDASQVKVFVIPTNEELAIARYAVKFA.

Position 8 (Asn8) interacts with Mg(2+). ATP is bound at residue Lys15. Arg92 contributes to the substrate binding site. Asp149 functions as the Proton donor/acceptor in the catalytic mechanism. ATP contacts are provided by residues 209–213 (HLGNG), 283–285 (DFR), and 331–335 (GVGEN). Mg(2+) is bound at residue Glu385.

Belongs to the acetokinase family. As to quaternary structure, homodimer. The cofactor is Mg(2+). Mn(2+) serves as cofactor.

It localises to the cytoplasm. The catalysed reaction is acetate + ATP = acetyl phosphate + ADP. It functions in the pathway metabolic intermediate biosynthesis; acetyl-CoA biosynthesis; acetyl-CoA from acetate: step 1/2. In terms of biological role, catalyzes the formation of acetyl phosphate from acetate and ATP. Can also catalyze the reverse reaction. In Corynebacterium glutamicum (strain R), this protein is Acetate kinase.